Consider the following 688-residue polypeptide: Polyphosphate kinase (688 aa).

N45 is an ATP binding site. R375 and R405 together coordinate Mg(2+). The region spanning 430 to 464 (PGLKIHAKLFLISRKENGEVVRYAHIGTGNFNEKT) is the PLD phosphodiesterase domain. The active-site Phosphohistidine intermediate is H435. ATP is bound by residues Y468, R564, and H592.

This sequence belongs to the polyphosphate kinase 1 (PPK1) family. Mg(2+) is required as a cofactor. An intermediate of this reaction is the autophosphorylated ppk in which a phosphate is covalently linked to a histidine residue through a N-P bond.

The enzyme catalyses [phosphate](n) + ATP = [phosphate](n+1) + ADP. Functionally, catalyzes the reversible transfer of the terminal phosphate of ATP to form a long-chain polyphosphate (polyP). In Escherichia coli O6:H1 (strain CFT073 / ATCC 700928 / UPEC), this protein is Polyphosphate kinase.